Consider the following 360-residue polypeptide: Putative mRNA-decapping protein (360 aa).

The CCHC-type zinc finger occupies 11–28 (HICSNCGRSGHEFRNCIE). Residues 163 to 347 (YKYDNILYHF…KKRILTRVYL (185 aa)) form the Nudix hydrolase domain. The Nudix box signature appears at 242–264 (GRRDKRSEENMVCACREFEEETG). Glu249 contacts Mg(2+). Residue Glu258 is the Nucleophile of the active site. A Mg(2+)-binding site is contributed by Glu262.

It belongs to the Nudix hydrolase family. DIPP subfamily. The cofactor is Mg(2+). Mn(2+) serves as cofactor.

The enzyme catalyses diphospho-myo-inositol polyphosphate + H2O = myo-inositol polyphosphate + phosphate.. Might function as a decapping enzyme required for the removal of the 5'-end m7GpppN cap tethered to viral and host mRNAs to allow their decay in cells. In addition to the mRNA cap, probably also efficiently hydrolyzes diphosphoinositol polyphosphates. The sequence is that of Putative mRNA-decapping protein from Acanthamoeba polyphaga (Amoeba).